Reading from the N-terminus, the 517-residue chain is Glycerol kinase (517 aa).

Position 24 (T24) interacts with ADP. Positions 24, 25, and 26 each coordinate ATP. Sn-glycerol 3-phosphate is bound at residue T24. R28 is an ADP binding site. 4 residues coordinate sn-glycerol 3-phosphate: R94, E95, Y146, and D261. Glycerol contacts are provided by R94, E95, Y146, D261, and Q262. ADP is bound by residues T283 and G327. Residues T283, G327, Q331, and G428 each contribute to the ATP site. Residues G428 and N432 each coordinate ADP.

Belongs to the FGGY kinase family.

It carries out the reaction glycerol + ATP = sn-glycerol 3-phosphate + ADP + H(+). It functions in the pathway polyol metabolism; glycerol degradation via glycerol kinase pathway; sn-glycerol 3-phosphate from glycerol: step 1/1. Its activity is regulated as follows. Inhibited by fructose 1,6-bisphosphate (FBP). Functionally, key enzyme in the regulation of glycerol uptake and metabolism. Catalyzes the phosphorylation of glycerol to yield sn-glycerol 3-phosphate. The protein is Glycerol kinase of Mycobacterium tuberculosis (strain ATCC 25177 / H37Ra).